The sequence spans 364 residues: MTTTELIPPTIQVDEEEEEACMFAMQLASASVLPMVLKSAIELDLLESIAKAGPGAYVSPSELAAKLPSSQPDTPVMLDRILRLLASYSVLKCKVQDLPQGGVERLYALAPVCKFLTKNSDGVSMAPLLLMNQDKILMESWYHLKDAVLDGGIPFNKAYGMTAFEYHGKDPRFNKVFNLGMSNHSTITMKKILQTYNGFAGLKTVVDVGGGTGATLNMIISKYPNIKGINFDLPHVVEDAPSYPGVEHVGGDMFVSVPEGDAIFMKWICHDWSDAHCLSFLKNCYKALPQNGKVILAECILPEAPDSKLTTKNVIHIDVIMLAHNPGGKERTEKEFEALGKMAGFKSFNKVCCAHNTWIMEFLK.

Asn132 contributes to the bergaptol binding site. 6 residues coordinate S-adenosyl-L-homocysteine: Gly209, Asp232, Asp252, Met253, Met265, and Lys266. Bergaptol is bound at residue His270. Residue His270 is the Proton acceptor of the active site.

Belongs to the class I-like SAM-binding methyltransferase superfamily. Cation-independent O-methyltransferase family. COMT subfamily. Homodimer. Expressed ubiquitously.

It catalyses the reaction bergaptol + S-adenosyl-L-methionine = bergapten + S-adenosyl-L-homocysteine. It carries out the reaction xanthotoxol + S-adenosyl-L-methionine = xanthotoxin + S-adenosyl-L-homocysteine + H(+). The catalysed reaction is esculetin + S-adenosyl-L-methionine = isoscopoletin + S-adenosyl-L-homocysteine + H(+). The enzyme catalyses esculetin + S-adenosyl-L-methionine = scopoletin + S-adenosyl-L-homocysteine + H(+). Its pathway is aromatic compound metabolism. It functions in the pathway secondary metabolite biosynthesis. Inhibited by zinc Zn(2+), copper Cu(2+) and silver Ag(+) ions. In terms of biological role, O-methyltransferase involved in the biosynthesis of methoxylated coumarins natural products such as isoscopoletin, scopoletin, xanthotoxin and bergapten, photosensitizers used for medical purpose such as treating psoriasis and vitiligo or facilitating resistance to microbial infection and other stresses. Catalyzes the methylation of esculetin, bergaptol and xanthotoxol, but seems inactive on scopoletin and isoscopoletin. This is Esculetin O-methyltransferase from Kitagawia praeruptora (Peucedanum praeruptorum).